Here is a 91-residue protein sequence, read N- to C-terminus: uncharacterized protein (91 aa).

The signal sequence occupies residues 1–20; the sequence is MFSRVLALLAVLLLSANTWA.

The protein belongs to the BhsA/McbA family.

The protein resides in the periplasm. This is an uncharacterized protein from Escherichia coli O157:H7.